A 152-amino-acid chain; its full sequence is Histone H2B.1 (152 aa).

The span at Met1–Pro28 shows a compositional bias: basic and acidic residues. Residues Met1–Lys60 form a disordered region. Residues Lys7 and Lys37 each carry the N6-acetyllysine modification. Lys148 participates in a covalent cross-link: Glycyl lysine isopeptide (Lys-Gly) (interchain with G-Cter in ubiquitin).

The protein belongs to the histone H2B family. As to quaternary structure, the nucleosome is a histone octamer containing two molecules each of H2A, H2B, H3 and H4 assembled in one H3-H4 heterotetramer and two H2A-H2B heterodimers. The octamer wraps approximately 147 bp of DNA. Can be acetylated to form H2BK6ac and H2BK33ac. In terms of processing, monoubiquitinated to form H2BK143ub1; may give a specific tag for epigenetic transcriptional activation.

The protein resides in the nucleus. Its subcellular location is the chromosome. Its function is as follows. Core component of nucleosome. Nucleosomes wrap and compact DNA into chromatin, limiting DNA accessibility to the cellular machineries which require DNA as a template. Histones thereby play a central role in transcription regulation, DNA repair, DNA replication and chromosomal stability. DNA accessibility is regulated via a complex set of post-translational modifications of histones, also called histone code, and nucleosome remodeling. In Triticum aestivum (Wheat), this protein is Histone H2B.1.